Reading from the N-terminus, the 369-residue chain is Glycine oxidase (369 aa).

FAD contacts are provided by residues 14–15 (II), 34–35 (ES), 42–43 (AT), 47–49 (AGM), and V174. Substrate is bound by residues R302 and R329. 327-333 (HFRNGIL) is an FAD binding site.

It belongs to the DAO family. ThiO subfamily. As to quaternary structure, homotetramer. The cofactor is FAD.

It carries out the reaction glycine + O2 + H2O = glyoxylate + H2O2 + NH4(+). The enzyme catalyses glyphosate + O2 + H2O = aminomethylphosphonate + glyoxylate + H2O2 + H(+). The catalysed reaction is N-ethylglycine + O2 + H2O = ethylamine + glyoxylate + H2O2. It catalyses the reaction sarcosine + O2 + H2O = methylamine + glyoxylate + H2O2. It carries out the reaction D-alanine + O2 + H2O = pyruvate + H2O2 + NH4(+). It functions in the pathway cofactor biosynthesis; thiamine diphosphate biosynthesis. Its function is as follows. Catalyzes the FAD-dependent oxidative deamination of glycine, leading to glyoxylate, ammonia and hydrogen peroxide. Is also able to act on various amines and D-amino acids to yield the corresponding alpha-keto acids, ammonia/amine, and hydrogen peroxide. Can also oxidize the herbicide glyphosate (N-phosphonomethylglycine), and thus may be involved in the degradation pathway that allows B.licheniformis J33-8 to grow with glyphosate as the sole source of carbon. Is essential for thiamine biosynthesis since the oxidation of glycine catalyzed by ThiO generates the glycine imine intermediate (dehydroglycine) required for the biosynthesis of the thiazole ring of thiamine pyrophosphate. This is Glycine oxidase from Bacillus licheniformis.